The primary structure comprises 426 residues: AP-1 complex subunit mu-1 (426 aa).

Positions 167–425 (KNEVFLDVIE…TQNGTEYSIR (259 aa)) constitute an MHD domain.

It belongs to the adaptor complexes medium subunit family. As to quaternary structure, adaptor protein complex 1 (AP-1) is a heterotetramer composed of two large adaptins (gamma-type subunit apl4 and beta-type subunit apl2), a medium adaptin (mu-type subunit apm1) and a small adaptin (sigma-type subunit aps1). AP-1 interacts with clathrin. Interacts with sad1.

The protein localises to the cytoplasmic vesicle. It localises to the clathrin-coated vesicle membrane. The protein resides in the membrane. It is found in the clathrin-coated pit. Its function is as follows. Component of the adaptor complexes which link clathrin to receptors in coated vesicles. Clathrin-associated protein complexes are believed to interact with the cytoplasmic tails of membrane proteins, leading to their selection and concentration. This Schizosaccharomyces pombe (strain 972 / ATCC 24843) (Fission yeast) protein is AP-1 complex subunit mu-1 (apm1).